The primary structure comprises 126 residues: Histone H2B type 1-H (126 aa).

Low complexity predominate over residues 1-12 (MPEPAKSAPAPK). Residues 1–36 (MPEPAKSAPAPKKGSKKALTKAQKKDGKKRKRSRKE) form a disordered region. Pro2 bears the N-acetylproline mark. At Glu3 the chain carries ADP-ribosyl glutamic acid. Position 6 is an N6-(2-hydroxyisobutyryl)lysine; alternate (Lys6). N6-(beta-hydroxybutyryl)lysine; alternate is present on Lys6. Lys6 is subject to N6-acetyllysine; alternate. Lys6 is modified (N6-butyryllysine; alternate). Residue Lys6 is modified to N6-crotonyllysine; alternate. Lys6 bears the N6-lactoyllysine; alternate mark. Lys6 is covalently cross-linked (Glycyl lysine isopeptide (Lys-Gly) (interchain with G-Cter in SUMO2); alternate). Ser7 is modified (ADP-ribosylserine). Lys12 carries the N6-(beta-hydroxybutyryl)lysine; alternate modification. Lys12 and Lys13 each carry N6-acetyllysine; alternate. N6-crotonyllysine; alternate is present on residues Lys12 and Lys13. Lys12 is subject to N6-lactoyllysine; alternate. Position 13 is an N6-(2-hydroxyisobutyryl)lysine; alternate (Lys13). Phosphoserine; by STK4/MST1 is present on Ser15. N6-acetyllysine; alternate is present on residues Lys16, Lys17, Lys21, and Lys24. An N6-crotonyllysine; alternate mark is found at Lys16, Lys17, Lys21, and Lys24. An N6-lactoyllysine; alternate mark is found at Lys16, Lys17, Lys21, and Lys24. Position 17 is an N6-glutaryllysine; alternate (Lys17). N6-(2-hydroxyisobutyryl)lysine; alternate is present on residues Lys21 and Lys24. Lys21 bears the N6-(beta-hydroxybutyryl)lysine; alternate mark. Lys21 bears the N6-butyryllysine; alternate mark. Lys21 is covalently cross-linked (Glycyl lysine isopeptide (Lys-Gly) (interchain with G-Cter in SUMO2); alternate). Lys25 is subject to N6-(2-hydroxyisobutyryl)lysine. Lys35 is modified (N6-(2-hydroxyisobutyryl)lysine; alternate). Residue Lys35 is modified to N6-(beta-hydroxybutyryl)lysine; alternate. The residue at position 35 (Lys35) is an N6-crotonyllysine; alternate. Position 35 is an N6-glutaryllysine; alternate (Lys35). Position 35 is an N6-succinyllysine; alternate (Lys35). Lys35 participates in a covalent cross-link: Glycyl lysine isopeptide (Lys-Gly) (interchain with G-Cter in ubiquitin); alternate. At Glu36 the chain carries PolyADP-ribosyl glutamic acid. The residue at position 37 (Ser37) is a Phosphoserine; by AMPK. N6-(2-hydroxyisobutyryl)lysine; alternate is present on residues Lys44, Lys47, and Lys58. An N6-lactoyllysine; alternate modification is found at Lys44. 2 positions are modified to N6-glutaryllysine; alternate: Lys44 and Lys47. Lys47 is modified (N6-methyllysine; alternate). Lys58 is modified (N6,N6-dimethyllysine; alternate). Arg80 carries the post-translational modification Dimethylated arginine. Residue Lys86 is modified to N6-(2-hydroxyisobutyryl)lysine; alternate. Residue Lys86 is modified to N6-acetyllysine; alternate. An N6-lactoyllysine; alternate modification is found at Lys86. Lys86 is modified (N6,N6,N6-trimethyllysine; alternate). Omega-N-methylarginine occurs at positions 87 and 93. Lys109 is subject to N6-(2-hydroxyisobutyryl)lysine; alternate. N6-(beta-hydroxybutyryl)lysine; alternate is present on Lys109. Lys109 bears the N6-lactoyllysine; alternate mark. Position 109 is an N6-glutaryllysine; alternate (Lys109). Lys109 is subject to N6-methyllysine; alternate. Residue Ser113 is glycosylated (O-linked (GlcNAc) serine). Residue Thr116 is modified to Phosphothreonine. N6-(2-hydroxyisobutyryl)lysine; alternate occurs at positions 117 and 121. Position 117 is an N6-(beta-hydroxybutyryl)lysine; alternate (Lys117). An N6-lactoyllysine; alternate mark is found at Lys117 and Lys121. 2 positions are modified to N6-glutaryllysine; alternate: Lys117 and Lys121. N6-succinyllysine; alternate is present on residues Lys117 and Lys121. The residue at position 117 (Lys117) is an N6-methylated lysine; alternate. Lys121 is covalently cross-linked (Glycyl lysine isopeptide (Lys-Gly) (interchain with G-Cter in ubiquitin); alternate).

Belongs to the histone H2B family. The nucleosome is a histone octamer containing two molecules each of H2A, H2B, H3 and H4 assembled in one H3-H4 heterotetramer and two H2A-H2B heterodimers. The octamer wraps approximately 147 bp of DNA. Post-translationally, monoubiquitination at Lys-35 (H2BK34Ub) by the MSL1/MSL2 dimer is required for histone H3 'Lys-4' (H3K4me) and 'Lys-79' (H3K79me) methylation and transcription activation at specific gene loci, such as HOXA9 and MEIS1 loci. Similarly, monoubiquitination at Lys-121 (H2BK120Ub) by the RNF20/40 complex gives a specific tag for epigenetic transcriptional activation and is also prerequisite for histone H3 'Lys-4' and 'Lys-79' methylation. It also functions cooperatively with the FACT dimer to stimulate elongation by RNA polymerase II. H2BK120Ub also acts as a regulator of mRNA splicing: deubiquitination by USP49 is required for efficient cotranscriptional splicing of a large set of exons. In terms of processing, phosphorylated on Ser-15 (H2BS14ph) by STK4/MST1 during apoptosis; which facilitates apoptotic chromatin condensation. Also phosphorylated on Ser-15 in response to DNA double strand breaks (DSBs), and in correlation with somatic hypermutation and immunoglobulin class-switch recombination. Phosphorylation at Ser-37 (H2BS36ph) by AMPK in response to stress promotes transcription. GlcNAcylation at Ser-113 promotes monoubiquitination of Lys-121. It fluctuates in response to extracellular glucose, and associates with transcribed genes. Post-translationally, ADP-ribosylated by PARP1 or PARP2 on Ser-7 (H2BS6ADPr) in response to DNA damage. H2BS6ADPr promotes recruitment of CHD1L. Mono-ADP-ribosylated on Glu-3 (H2BE2ADPr) by PARP3 in response to single-strand breaks. Poly ADP-ribosylation on Glu-36 (H2BE35ADPr) by PARP1 regulates adipogenesis: it inhibits phosphorylation at Ser-37 (H2BS36ph), thereby blocking expression of pro-adipogenetic genes. In terms of processing, crotonylation (Kcr) is specifically present in male germ cells and marks testis-specific genes in post-meiotic cells, including X-linked genes that escape sex chromosome inactivation in haploid cells. Crotonylation marks active promoters and enhancers and confers resistance to transcriptional repressors. It is also associated with post-meiotically activated genes on autosomes. Hydroxybutyrylation of histones is induced by starvation. Post-translationally, lactylated in macrophages by EP300/P300 by using lactoyl-CoA directly derived from endogenous or exogenous lactate, leading to stimulates gene transcription.

Its subcellular location is the nucleus. The protein resides in the chromosome. Core component of nucleosome. Nucleosomes wrap and compact DNA into chromatin, limiting DNA accessibility to the cellular machineries which require DNA as a template. Histones thereby play a central role in transcription regulation, DNA repair, DNA replication and chromosomal stability. DNA accessibility is regulated via a complex set of post-translational modifications of histones, also called histone code, and nucleosome remodeling. In Mus musculus (Mouse), this protein is Histone H2B type 1-H.